The sequence spans 435 residues: Polyadenylate-binding protein RBP47B (435 aa).

The segment covering 1–15 (MQTTNGSDSTLATSG) has biased composition (polar residues). 2 disordered regions span residues 1 to 41 (MQTT…QQWM) and 85 to 104 (YGSYQQHQHQQHKAIDRGSG). Positions 29–41 (QWQQQQQQQQQWM) are enriched in low complexity. RRM domains lie at 108 to 188 (KTLW…WASF), 202 to 281 (LSVF…IATP), and 321 to 393 (ATIF…WGRS). The tract at residues 392-412 (RSPNKQWRGDSGQQWNGGYSR) is disordered.

It belongs to the polyadenylate-binding RBP47 family. Interacts with the poly(A) tail of mRNA in nucleus. Expressed at low levels in leaves, stems, flowers, and seedlings.

Its subcellular location is the nucleus. The protein localises to the cytoplasmic granule. Its function is as follows. Heterogeneous nuclear ribonucleoprotein (hnRNP)-protein binding the poly(A) tail of mRNA and probably involved in some steps of pre-mRNA maturation. This chain is Polyadenylate-binding protein RBP47B (RBP47B), found in Arabidopsis thaliana (Mouse-ear cress).